The following is a 511-amino-acid chain: Phosphoenolpyruvate carboxylase (511 aa).

It belongs to the PEPCase type 2 family. As to quaternary structure, homotetramer. Mg(2+) is required as a cofactor.

The enzyme catalyses oxaloacetate + phosphate = phosphoenolpyruvate + hydrogencarbonate. With respect to regulation, allosterically inhibited by L-aspartate and L-malate. PEPC activity is not affected by allosteric activators of E.coli PEPC such as glucose 6-phosphate, fructose 1,6-bisphosphate, and acetyl coenzyme A. Catalyzes the irreversible beta-carboxylation of phosphoenolpyruvate (PEP) to form oxaloacetate (OAA), a four-carbon dicarboxylic acid source for the tricarboxylic acid cycle. In Saccharolobus solfataricus (strain ATCC 35092 / DSM 1617 / JCM 11322 / P2) (Sulfolobus solfataricus), this protein is Phosphoenolpyruvate carboxylase.